The sequence spans 254 residues: Triosephosphate isomerase (254 aa).

12–14 (NWK) lines the substrate pocket. The Electrophile role is filled by H99. E169 (proton acceptor) is an active-site residue. Substrate is bound by residues G175, S214, and 235 to 236 (GG).

Belongs to the triosephosphate isomerase family. In terms of assembly, homodimer.

Its subcellular location is the cytoplasm. It carries out the reaction D-glyceraldehyde 3-phosphate = dihydroxyacetone phosphate. The protein operates within carbohydrate biosynthesis; gluconeogenesis. It functions in the pathway carbohydrate degradation; glycolysis; D-glyceraldehyde 3-phosphate from glycerone phosphate: step 1/1. Functionally, involved in the gluconeogenesis. Catalyzes stereospecifically the conversion of dihydroxyacetone phosphate (DHAP) to D-glyceraldehyde-3-phosphate (G3P). This chain is Triosephosphate isomerase, found in Bartonella henselae (strain ATCC 49882 / DSM 28221 / CCUG 30454 / Houston 1) (Rochalimaea henselae).